The sequence spans 383 residues: 1-deoxy-D-xylulose 5-phosphate reductoisomerase (383 aa).

Residues T10, G11, S12, I13, G36, R37, N38, and N122 each contribute to the NADPH site. Residue K123 participates in 1-deoxy-D-xylulose 5-phosphate binding. E124 lines the NADPH pocket. Mn(2+) is bound at residue D148. 1-deoxy-D-xylulose 5-phosphate-binding residues include S149, E150, S174, and H197. E150 contributes to the Mn(2+) binding site. An NADPH-binding site is contributed by G203. The 1-deoxy-D-xylulose 5-phosphate site is built by S210, N215, K216, and E219. E219 lines the Mn(2+) pocket.

Belongs to the DXR family. The cofactor is Mg(2+). Mn(2+) serves as cofactor.

It carries out the reaction 2-C-methyl-D-erythritol 4-phosphate + NADP(+) = 1-deoxy-D-xylulose 5-phosphate + NADPH + H(+). It functions in the pathway isoprenoid biosynthesis; isopentenyl diphosphate biosynthesis via DXP pathway; isopentenyl diphosphate from 1-deoxy-D-xylulose 5-phosphate: step 1/6. Its function is as follows. Catalyzes the NADPH-dependent rearrangement and reduction of 1-deoxy-D-xylulose-5-phosphate (DXP) to 2-C-methyl-D-erythritol 4-phosphate (MEP). The chain is 1-deoxy-D-xylulose 5-phosphate reductoisomerase from Bacillus subtilis (strain 168).